Consider the following 569-residue polypeptide: RNA demethylase ALKBH10B (569 aa).

Residues 118-151 adopt a coiled-coil conformation; the sequence is QKVAAKKAEDLKQKKTEEEAEEDLKEVVATEEEE. Positions 164-190 are disordered; the sequence is ENDVNGDVEDVEDDSPTSDITDSGSHQ. A compositionally biased stretch (acidic residues) spans 167–179; that stretch reads VNGDVEDVEDDSP. The span at 180-189 shows a compositional bias: polar residues; it reads TSDITDSGSH. Residues histidine 366, glutamate 368, and histidine 421 each contribute to the Fe cation site. Residue arginine 430 coordinates 2-oxoglutarate. Residues 531 to 545 are compositionally biased toward basic residues; the sequence is KHVKHLPPRAQKKRL. The tract at residues 531-569 is disordered; it reads KHVKHLPPRAQKKRLLPLPPAASSSPAGGSTSEPVITVG. Positions 551 to 560 are enriched in low complexity; it reads AASSSPAGGS.

Belongs to the alkB family. It depends on Fe(2+) as a cofactor.

The enzyme catalyses an N(6)-methyladenosine in mRNA + 2-oxoglutarate + O2 = an adenosine in mRNA + formaldehyde + succinate + CO2. Dioxygenase that demethylates RNA by oxidative demethylation: specifically demethylates N(6)-methyladenosine (m6A) RNA, the most prevalent internal modification of messenger RNA (mRNA) in higher eukaryotes. ALKBH10B-mediated mRNA m6A demethylation stabilizes the mRNA of the key flowering time regulators FT, SPL3 and SPL9, which are involved in the control of floral transition. This is RNA demethylase ALKBH10B from Arabidopsis thaliana (Mouse-ear cress).